A 739-amino-acid polypeptide reads, in one-letter code: Probable beta-glucosidase L (739 aa).

The signal sequence occupies residues 1–17 (MQNLFLSLLAAAVTVHA). An N-linked (GlcNAc...) asparagine glycan is attached at asparagine 224. Aspartate 252 is an active-site residue. N-linked (GlcNAc...) asparagine glycosylation occurs at asparagine 398.

Belongs to the glycosyl hydrolase 3 family.

It localises to the secreted. The enzyme catalyses Hydrolysis of terminal, non-reducing beta-D-glucosyl residues with release of beta-D-glucose.. Its pathway is glycan metabolism; cellulose degradation. Its function is as follows. Beta-glucosidases are one of a number of cellulolytic enzymes involved in the degradation of cellulosic biomass. Catalyzes the last step releasing glucose from the inhibitory cellobiose. The sequence is that of Probable beta-glucosidase L (bglL) from Neosartorya fischeri (strain ATCC 1020 / DSM 3700 / CBS 544.65 / FGSC A1164 / JCM 1740 / NRRL 181 / WB 181) (Aspergillus fischerianus).